The following is a 407-amino-acid chain: Proteasome-activating nucleotidase (407 aa).

The stretch at 22 to 67 (KEKTQIAELESKVLRLELKNKDVTRENVQIKKENEILKRELDKLRI) forms a coiled coil. ATP is bound by residues 192–197 (GTGKTL) and His331. The interval 405 to 407 (MYG) is docks into pockets in the proteasome alpha-ring to cause gate opening.

It belongs to the AAA ATPase family. In terms of assembly, homohexamer. The hexameric complex has a two-ring architecture resembling a top hat that caps the 20S proteasome core at one or both ends. Upon ATP-binding, the C-terminus of PAN interacts with the alpha-rings of the proteasome core by binding to the intersubunit pockets.

Its subcellular location is the cytoplasm. Its function is as follows. ATPase which is responsible for recognizing, binding, unfolding and translocation of substrate proteins into the archaeal 20S proteasome core particle. Is essential for opening the gate of the 20S proteasome via an interaction with its C-terminus, thereby allowing substrate entry and access to the site of proteolysis. Thus, the C-termini of the proteasomal ATPase function like a 'key in a lock' to induce gate opening and therefore regulate proteolysis. Unfolding activity requires energy from ATP hydrolysis, whereas ATP binding alone promotes ATPase-20S proteasome association which triggers gate opening, and supports translocation of unfolded substrates. This Methanococcus maripaludis (strain C7 / ATCC BAA-1331) protein is Proteasome-activating nucleotidase.